A 129-amino-acid polypeptide reads, in one-letter code: UPF0102 protein Cpar_0015 (129 aa).

The protein belongs to the UPF0102 family.

In Chlorobaculum parvum (strain DSM 263 / NCIMB 8327) (Chlorobium vibrioforme subsp. thiosulfatophilum), this protein is UPF0102 protein Cpar_0015.